Consider the following 98-residue polypeptide: Aspartyl/glutamyl-tRNA(Asn/Gln) amidotransferase subunit C (98 aa).

This sequence belongs to the GatC family. In terms of assembly, heterotrimer of A, B and C subunits.

The catalysed reaction is L-glutamyl-tRNA(Gln) + L-glutamine + ATP + H2O = L-glutaminyl-tRNA(Gln) + L-glutamate + ADP + phosphate + H(+). It carries out the reaction L-aspartyl-tRNA(Asn) + L-glutamine + ATP + H2O = L-asparaginyl-tRNA(Asn) + L-glutamate + ADP + phosphate + 2 H(+). Allows the formation of correctly charged Asn-tRNA(Asn) or Gln-tRNA(Gln) through the transamidation of misacylated Asp-tRNA(Asn) or Glu-tRNA(Gln) in organisms which lack either or both of asparaginyl-tRNA or glutaminyl-tRNA synthetases. The reaction takes place in the presence of glutamine and ATP through an activated phospho-Asp-tRNA(Asn) or phospho-Glu-tRNA(Gln). This is Aspartyl/glutamyl-tRNA(Asn/Gln) amidotransferase subunit C from Microcystis aeruginosa (strain NIES-843 / IAM M-2473).